Reading from the N-terminus, the 162-residue chain is Protein-export protein SecB (162 aa).

Belongs to the SecB family. As to quaternary structure, homotetramer, a dimer of dimers. One homotetramer interacts with 1 SecA dimer.

It localises to the cytoplasm. Functionally, one of the proteins required for the normal export of preproteins out of the cell cytoplasm. It is a molecular chaperone that binds to a subset of precursor proteins, maintaining them in a translocation-competent state. It also specifically binds to its receptor SecA. This Pseudoalteromonas translucida (strain TAC 125) protein is Protein-export protein SecB.